Consider the following 144-residue polypeptide: D-aminoacyl-tRNA deacylase (144 aa).

Positions 136 to 137 (GP) match the Gly-cisPro motif, important for rejection of L-amino acids motif.

Belongs to the DTD family. In terms of assembly, homodimer.

It is found in the cytoplasm. The enzyme catalyses glycyl-tRNA(Ala) + H2O = tRNA(Ala) + glycine + H(+). It catalyses the reaction a D-aminoacyl-tRNA + H2O = a tRNA + a D-alpha-amino acid + H(+). In terms of biological role, an aminoacyl-tRNA editing enzyme that deacylates mischarged D-aminoacyl-tRNAs. Also deacylates mischarged glycyl-tRNA(Ala), protecting cells against glycine mischarging by AlaRS. Acts via tRNA-based rather than protein-based catalysis; rejects L-amino acids rather than detecting D-amino acids in the active site. By recycling D-aminoacyl-tRNA to D-amino acids and free tRNA molecules, this enzyme counteracts the toxicity associated with the formation of D-aminoacyl-tRNA entities in vivo and helps enforce protein L-homochirality. The chain is D-aminoacyl-tRNA deacylase from Corynebacterium glutamicum (strain R).